The following is a 156-amino-acid chain: Endoribonuclease YbeY (156 aa).

Positions 122, 126, and 132 each coordinate Zn(2+).

Belongs to the endoribonuclease YbeY family. The cofactor is Zn(2+).

Its subcellular location is the cytoplasm. Functionally, single strand-specific metallo-endoribonuclease involved in late-stage 70S ribosome quality control and in maturation of the 3' terminus of the 16S rRNA. This chain is Endoribonuclease YbeY, found in Geobacillus sp. (strain WCH70).